The following is a 610-amino-acid chain: Elongation factor 4 (610 aa).

One can recognise a tr-type G domain in the interval 7–189 (SRIRNFSIIA…AIVQRIPPPK (183 aa)). GTP-binding positions include 19-24 (DHGKST) and 136-139 (NKID).

The protein belongs to the TRAFAC class translation factor GTPase superfamily. Classic translation factor GTPase family. LepA subfamily.

The protein resides in the cell inner membrane. It carries out the reaction GTP + H2O = GDP + phosphate + H(+). Functionally, required for accurate and efficient protein synthesis under certain stress conditions. May act as a fidelity factor of the translation reaction, by catalyzing a one-codon backward translocation of tRNAs on improperly translocated ribosomes. Back-translocation proceeds from a post-translocation (POST) complex to a pre-translocation (PRE) complex, thus giving elongation factor G a second chance to translocate the tRNAs correctly. Binds to ribosomes in a GTP-dependent manner. The protein is Elongation factor 4 of Thermus thermophilus (strain ATCC 27634 / DSM 579 / HB8).